Here is a 1378-residue protein sequence, read N- to C-terminus: DNA-directed RNA polymerase subunit beta (1378 aa).

It belongs to the RNA polymerase beta chain family. The RNAP catalytic core consists of 2 alpha, 1 beta, 1 beta' and 1 omega subunit. When a sigma factor is associated with the core the holoenzyme is formed, which can initiate transcription.

It catalyses the reaction RNA(n) + a ribonucleoside 5'-triphosphate = RNA(n+1) + diphosphate. Its function is as follows. DNA-dependent RNA polymerase catalyzes the transcription of DNA into RNA using the four ribonucleoside triphosphates as substrates. This is DNA-directed RNA polymerase subunit beta from Agrobacterium fabrum (strain C58 / ATCC 33970) (Agrobacterium tumefaciens (strain C58)).